A 1347-amino-acid chain; its full sequence is Protocadherin-11 X-linked (1347 aa).

An N-terminal signal peptide occupies residues 1 to 23 (MDLLSGTYIFAVLLACVVFHSGA). Residues 24–812 (QEKNYTIREE…VSSPTSDYVK (789 aa)) lie on the Extracellular side of the membrane. Cadherin domains lie at 26–139 (KNYT…APLF), 140–249 (PATV…HPVF), 250–355 (KETE…VPSI), 362–466 (NPVN…APVF), 467–570 (TQSF…SPVF), 571–673 (THNE…KPVF), and 677–795 (PSNY…APVT). Residues Asn27, Asn48, and Asn54 are each glycosylated (N-linked (GlcNAc...) asparagine). Asn344 carries N-linked (GlcNAc...) asparagine glycosylation. The N-linked (GlcNAc...) asparagine glycan is linked to Asn553. A glycan (N-linked (GlcNAc...) asparagine) is linked at Asn773. Residues 813–833 (ILVAAVAGTITVVVVIFITAV) traverse the membrane as a helical segment. Residues 834 to 1347 (VRCRQAPHLK…DSPVMEEHPL (514 aa)) lie on the Cytoplasmic side of the membrane. 3 disordered regions span residues 1057 to 1091 (LPEG…GYPQ), 1097 to 1116 (RATP…ESTF), and 1325 to 1347 (TFTP…EHPL).

It is found in the cell membrane. Functionally, potential calcium-dependent cell-adhesion protein. The polypeptide is Protocadherin-11 X-linked (PCDH11X) (Pan troglodytes (Chimpanzee)).